The primary structure comprises 429 residues: Histidinol dehydrogenase (429 aa).

Positions 130, 191, and 214 each coordinate NAD(+). Substrate is bound by residues serine 237, glutamine 259, and histidine 262. Zn(2+) contacts are provided by glutamine 259 and histidine 262. Residues glutamate 327 and histidine 328 each act as proton acceptor in the active site. Substrate contacts are provided by histidine 328, aspartate 361, glutamate 415, and histidine 420. Aspartate 361 provides a ligand contact to Zn(2+). Histidine 420 contributes to the Zn(2+) binding site.

The protein belongs to the histidinol dehydrogenase family. Requires Zn(2+) as cofactor.

The catalysed reaction is L-histidinol + 2 NAD(+) + H2O = L-histidine + 2 NADH + 3 H(+). It functions in the pathway amino-acid biosynthesis; L-histidine biosynthesis; L-histidine from 5-phospho-alpha-D-ribose 1-diphosphate: step 9/9. Catalyzes the sequential NAD-dependent oxidations of L-histidinol to L-histidinaldehyde and then to L-histidine. The chain is Histidinol dehydrogenase from Nitrobacter winogradskyi (strain ATCC 25391 / DSM 10237 / CIP 104748 / NCIMB 11846 / Nb-255).